The chain runs to 817 residues: tRNA(Met) cytidine acetyltransferase TmcA (817 aa).

ATP is bound by residues Gln265, 289–298 (GRGKSVSVGI), and Arg439. In terms of domain architecture, N-acetyltransferase spans 469-664 (ELIRKMEVYL…YTAIVIKPIS (196 aa)). Acetyl-CoA is bound by residues 589–591 (IAT), 596–602 (MDLGLGS), Glu629, and Arg636.

It belongs to the RNA cytidine acetyltransferase family. TmcA subfamily.

Its subcellular location is the cytoplasm. The enzyme catalyses cytidine(34) in elongator tRNA(Met) + acetyl-CoA + ATP + H2O = N(4)-acetylcytidine(34) in elongator tRNA(Met) + ADP + phosphate + CoA + H(+). It catalyses the reaction a cytidine in RNA + acetyl-CoA + ATP + H2O = an N(4)-acetylcytidine in RNA + ADP + phosphate + CoA + H(+). The catalysed reaction is a cytidine in tRNA + acetyl-CoA + ATP + H2O = an N(4)-acetylcytidine in tRNA + ADP + phosphate + CoA + H(+). It carries out the reaction a cytidine in mRNA + acetyl-CoA + ATP + H2O = an N(4)-acetylcytidine in mRNA + ADP + phosphate + CoA + H(+). Functionally, catalyzes the formation of N(4)-acetylcytidine (ac(4)C) at the wobble position of tRNA(Met), by using acetyl-CoA as an acetyl donor and ATP (or GTP). In terms of biological role, catalyzes the formation of N(4)-acetylcytidine (ac(4)C) sites in rRNA, tRNA, mRNA and non-coding (nc) RNA, almost always on the middle C of a CCG motif. In hyperthermophiles more acetylation is seen at higher temperatures. In Pyrococcus abyssi (strain GE5 / Orsay), this protein is tRNA(Met) cytidine acetyltransferase TmcA.